Here is a 143-residue protein sequence, read N- to C-terminus: 3-dehydroquinate dehydratase (143 aa).

Y22 acts as the Proton acceptor in catalysis. Residues N73, H79, and D86 each coordinate substrate. Residue H99 is the Proton donor of the active site. Substrate is bound by residues 100 to 101 and R110; that span reads IS.

Belongs to the type-II 3-dehydroquinase family. As to quaternary structure, homododecamer.

It carries out the reaction 3-dehydroquinate = 3-dehydroshikimate + H2O. Its pathway is metabolic intermediate biosynthesis; chorismate biosynthesis; chorismate from D-erythrose 4-phosphate and phosphoenolpyruvate: step 3/7. Functionally, catalyzes a trans-dehydration via an enolate intermediate. This is 3-dehydroquinate dehydratase from Salinispora arenicola (strain CNS-205).